The sequence spans 248 residues: UPF0736 protein ABC2536 (248 aa).

Belongs to the UPF0736 family.

This chain is UPF0736 protein ABC2536, found in Shouchella clausii (strain KSM-K16) (Alkalihalobacillus clausii).